The following is a 493-amino-acid chain: Keratin, type II cuticular Hb3 (493 aa).

Residues 1–111 (MTCGFSTVGS…PNAQCVKQEE (111 aa)) form a head region. Residues 111–422 (EKEQIKCLNN…RLLEGEEQRL (312 aa)) enclose the IF rod domain. The coil 1A stretch occupies residues 112 to 146 (KEQIKCLNNRFAAFIDKVRFLEQQNKLLETKLQFY). The interval 147–156 (QNRQCCESNL) is linker 1. Residues 157 to 257 (EPLFEGYIET…YEEEIRVLQA (101 aa)) form a coil 1B region. K217 is covalently cross-linked (Glycyl lysine isopeptide (Lys-Gly) (interchain with G-Cter in SUMO1)). A linker 12 region spans residues 258–274 (NISDTSVIVKMDNSRGL). Residues 275–418 (NMDNIVAEIK…ATYRRLLEGE (144 aa)) are coil 2. The interval 419-493 (EQRLCEGVGA…GGGSCSLGRC (75 aa)) is tail.

This sequence belongs to the intermediate filament family. In terms of assembly, heterotetramer of two type I and two type II keratins.

The polypeptide is Keratin, type II cuticular Hb3 (Bos taurus (Bovine)).